Here is a 300-residue protein sequence, read N- to C-terminus: Ribosomal RNA small subunit methyltransferase H (300 aa).

S-adenosyl-L-methionine contacts are provided by residues 46 to 48 (GGH), D65, F92, D107, and Q114.

Belongs to the methyltransferase superfamily. RsmH family.

Its subcellular location is the cytoplasm. It carries out the reaction cytidine(1402) in 16S rRNA + S-adenosyl-L-methionine = N(4)-methylcytidine(1402) in 16S rRNA + S-adenosyl-L-homocysteine + H(+). Functionally, specifically methylates the N4 position of cytidine in position 1402 (C1402) of 16S rRNA. The protein is Ribosomal RNA small subunit methyltransferase H of Prochlorococcus marinus (strain AS9601).